The chain runs to 415 residues: Fructose-like permease IIC component (415 aa).

Residues Met-1 to Met-46 lie on the Cytoplasmic side of the membrane. One can recognise a PTS EIIC type-2 domain in the interval Leu-35–Leu-415. Residues Val-47–Trp-67 traverse the membrane as a helical segment. Residues Leu-68–Ser-101 are Periplasmic-facing. Residues Phe-102–Ile-122 traverse the membrane as a helical segment. Topologically, residues Gly-123–Leu-126 are cytoplasmic. A helical transmembrane segment spans residues Ala-127–Phe-147. Residues Asp-148–Ser-157 lie on the Periplasmic side of the membrane. A helical transmembrane segment spans residues Ser-158–Val-178. The Cytoplasmic segment spans residues Lys-179–Thr-197. A helical transmembrane segment spans residues Phe-198 to Pro-218. At Phe-219–Lys-237 the chain is on the periplasmic side. The helical transmembrane segment at Gly-238–Ile-258 threads the bilayer. Residues Asn-259–Pro-276 lie on the Cytoplasmic side of the membrane. The helical transmembrane segment at Val-277–Ile-297 threads the bilayer. The Periplasmic portion of the chain corresponds to Asp-298 to Ala-318. The chain crosses the membrane as a helical span at residues Met-319–Ile-339. Topologically, residues Thr-340 to Ala-341 are cytoplasmic. The chain crosses the membrane as a helical span at residues Ile-342–Val-362. At Gln-363–Asn-378 the chain is on the periplasmic side. Residues Leu-379–Phe-399 traverse the membrane as a helical segment. The Cytoplasmic portion of the chain corresponds to Leu-400–Leu-415.

It localises to the cell inner membrane. In terms of biological role, the phosphoenolpyruvate-dependent sugar phosphotransferase system (PTS), a major carbohydrate active -transport system, catalyzes the phosphorylation of incoming sugar substrates concomitant with their translocation across the cell membrane. This is Fructose-like permease IIC component (fryC) from Escherichia coli O6:H1 (strain CFT073 / ATCC 700928 / UPEC).